We begin with the raw amino-acid sequence, 145 residues long: Secreted RxLR effector protein PSE1 (145 aa).

A signal peptide spans 1–21 (MRLSSFIVVGAAVVNLLTSGS). The RxLR-dEER motif lies at 53–73 (RLLRYHSNNNRGGDEDIAEER).

It belongs to the RxLR effector family.

It is found in the secreted. It localises to the host cell. In terms of biological role, secreted effector that impairs both plant effector-triggered immunity and pathogen-associated molecular patterns (PAMP)-triggered immunity (PTI). Suppresses plant cell death as a part of the plant defense responses. Facilitates plant infection by altering the auxin content at the roots penetration points of the of the pathogen. This is Secreted RxLR effector protein PSE1 from Phytophthora nicotianae (Potato buckeye rot agent).